We begin with the raw amino-acid sequence, 74 residues long: uncharacterized protein (74 aa).

Its subcellular location is the mitochondrion. This is an uncharacterized protein from Marchantia polymorpha (Common liverwort).